A 131-amino-acid chain; its full sequence is Sec-independent protein translocase protein TatB (131 aa).

A helical transmembrane segment spans residues Phe2–Gly22. Polar residues predominate over residues Leu86–Arg95. The disordered stretch occupies residues Leu86 to Gly131. Residues Thr115–Gly131 show a composition bias toward low complexity.

The protein belongs to the TatB family. As to quaternary structure, the Tat system comprises two distinct complexes: a TatABC complex, containing multiple copies of TatA, TatB and TatC subunits, and a separate TatA complex, containing only TatA subunits. Substrates initially bind to the TatABC complex, which probably triggers association of the separate TatA complex to form the active translocon.

It is found in the cell inner membrane. Its function is as follows. Part of the twin-arginine translocation (Tat) system that transports large folded proteins containing a characteristic twin-arginine motif in their signal peptide across membranes. Together with TatC, TatB is part of a receptor directly interacting with Tat signal peptides. TatB may form an oligomeric binding site that transiently accommodates folded Tat precursor proteins before their translocation. The polypeptide is Sec-independent protein translocase protein TatB (Shewanella halifaxensis (strain HAW-EB4)).